The primary structure comprises 40 residues: Neutral phospholipase A2 homolog cannitoxin beta chain 2 (40 aa).

In terms of assembly, heterotrimer of alpha, beta, and gamma chains; non-covalently linked. In terms of tissue distribution, expressed by the venom gland.

Its subcellular location is the secreted. In terms of biological role, heterotrimer: Snake venom phospholipase A2 (PLA2) heterotrimer that acts as a potent presynaptic neurotoxin by blocking synaptic transmission and synaptic vesicle recycling. Enzymatic activity is essential for the neurotoxic effects. May act by binding in a calcium-dependent fashion to neurotonal pentraxin-1 (NPTX1) and neurotonal pentraxin-2 (NPTX2), but not to neuronal pentraxin receptor (NPTXR). Also binds to taipoxin-associated calcium binding protein 49 (RCN2), a protein localized in the lumen of endoplasmic reticulum. Functionally, monomer (beta chain): Snake venom phospholipase A2 homolog that is neither toxic nor enzymatically active. Does not bind calcium. In Oxyuranus scutellatus canni (Papuan taipan), this protein is Neutral phospholipase A2 homolog cannitoxin beta chain 2.